Reading from the N-terminus, the 430-residue chain is Histidine--tRNA ligase (430 aa).

The protein belongs to the class-II aminoacyl-tRNA synthetase family. In terms of assembly, homodimer.

Its subcellular location is the cytoplasm. It carries out the reaction tRNA(His) + L-histidine + ATP = L-histidyl-tRNA(His) + AMP + diphosphate + H(+). The protein is Histidine--tRNA ligase of Chlorobium luteolum (strain DSM 273 / BCRC 81028 / 2530) (Pelodictyon luteolum).